A 130-amino-acid chain; its full sequence is Ribonuclease VapC46 (130 aa).

In terms of domain architecture, PINc spans 4 to 118 (IYLDSSAIVK…CTYDDRMRDA (115 aa)). The Mg(2+) site is built by D7 and D91.

This sequence belongs to the PINc/VapC protein family. Mg(2+) serves as cofactor.

Functionally, toxic component of a type II toxin-antitoxin (TA) system. An RNase. Upon expression in M.smegmatis inhibits colony formation. Its toxic effect is neutralized by coexpression with cognate antitoxin VapB46. This is Ribonuclease VapC46 from Mycobacterium tuberculosis (strain ATCC 25618 / H37Rv).